The chain runs to 767 residues: Ribonucleoside-diphosphate reductase subunit alpha (767 aa).

Residues 1-30 (MHPTLISAPISSSANDAHAGTSQGSHQGHR) are disordered. A compositionally biased stretch (polar residues) spans 9-26 (PISSSANDAHAGTSQGSH). The ATP-cone domain maps to 31 to 120 (IQVIRRDGSS…VWSLWKDTLV (90 aa)). Residues T228, 243 to 244 (SC), G272, 460 to 464 (NLCCE), and 631 to 635 (PNTSS) contribute to the substrate site. C244 and C478 are disulfide-bonded. The active-site Proton acceptor is the N460. The active-site Cysteine radical intermediate is C462. E464 acts as the Proton acceptor in catalysis.

It belongs to the ribonucleoside diphosphate reductase large chain family. Tetramer of two alpha and two beta subunits.

It carries out the reaction a 2'-deoxyribonucleoside 5'-diphosphate + [thioredoxin]-disulfide + H2O = a ribonucleoside 5'-diphosphate + [thioredoxin]-dithiol. With respect to regulation, under complex allosteric control mediated by deoxynucleoside triphosphates and ATP binding. The type of nucleotide bound at the specificity site determines substrate preference. It seems probable that ATP makes the enzyme reduce CDP and UDP, dGTP favors ADP reduction and dTTP favors GDP reduction. Functionally, provides the precursors necessary for DNA synthesis. Catalyzes the biosynthesis of deoxyribonucleotides from the corresponding ribonucleotides. This is Ribonucleoside-diphosphate reductase subunit alpha (nrdA) from Synechocystis sp. (strain ATCC 27184 / PCC 6803 / Kazusa).